Consider the following 138-residue polypeptide: Large ribosomal subunit protein uL16 (138 aa).

Basic residues predominate over residues 1-15 (MLSPRKVKYRKKQRG). The interval 1-20 (MLSPRKVKYRKKQRGRLSGE) is disordered.

The protein belongs to the universal ribosomal protein uL16 family. In terms of assembly, part of the 50S ribosomal subunit.

In terms of biological role, binds 23S rRNA and is also seen to make contacts with the A and possibly P site tRNAs. This is Large ribosomal subunit protein uL16 from Borrelia turicatae (strain 91E135).